The sequence spans 642 residues: Threonine--tRNA ligase (642 aa).

The region spanning 1–61 (MPIITLPDGS…SEDANLEIIT (61 aa)) is the TGS domain. A catalytic region spans residues 243–534 (DHRKIGKALN…ITEEYAGFFP (292 aa)). Zn(2+) is bound by residues C334, H385, and H511.

Belongs to the class-II aminoacyl-tRNA synthetase family. Homodimer. Zn(2+) serves as cofactor.

It localises to the cytoplasm. It carries out the reaction tRNA(Thr) + L-threonine + ATP = L-threonyl-tRNA(Thr) + AMP + diphosphate + H(+). In terms of biological role, catalyzes the attachment of threonine to tRNA(Thr) in a two-step reaction: L-threonine is first activated by ATP to form Thr-AMP and then transferred to the acceptor end of tRNA(Thr). Also edits incorrectly charged L-seryl-tRNA(Thr). The chain is Threonine--tRNA ligase from Histophilus somni (strain 2336) (Haemophilus somnus).